We begin with the raw amino-acid sequence, 146 residues long: Small nuclear ribonucleoprotein Sm D1 (146 aa).

One can recognise a Sm domain in the interval 2-101; it reads KLVNFLKKLR…IRQIILPDSL (100 aa). Residues 118–146 form a disordered region; it reads RSGQIANDPSKKRRRDFGAPANKRPRRGL. The Nuclear localization signal motif lies at 128 to 144; it reads KKRRRDFGAPANKRPRR.

It belongs to the snRNP core protein family. As to quaternary structure, component of the Sm core complex, present in spliceosomal snRNP U1, U2, U4/U6 and U5. The core complex contains SMB1, SMD1, SMD2, SMD3, SME1, SMX3 and SMX2 (Sm proteins B, D1, D2, D3, E, F and G, respectively), and is probably a heptameric ring structure. Belongs to the CWC complex (or CEF1-associated complex), a spliceosome sub-complex reminiscent of a late-stage spliceosome composed of the U2, U5 and U6 snRNAs and at least BUD13, BUD31, BRR2, CDC40, CEF1, CLF1, CUS1, CWC2, CWC15, CWC21, CWC22, CWC23, CWC24, CWC25, CWC27, ECM2, HSH155, IST3, ISY1, LEA1, MSL1, NTC20, PRP8, PRP9, PRP11, PRP19, PRP21, PRP22, PRP45, PRP46, SLU7, SMB1, SMD1, SMD2, SMD3, SMX2, SMX3, SNT309, SNU114, SPP2, SYF1, SYF2, RSE1 and YJU2. Component of the U4/U6-U5 tri-snRNP complex composed of the U4, U6 and U5 snRNAs and at least PRP3, PRP4, PRP6, PRP8, PRP18, PRP31, PRP38, SNU13, SNU23, SNU66, SNU114, SPP381, SMB1, SMD1, SMD2, SMD3, SMX2, SMX3, LSM2, LSM3, LSM4, LSM5, LSM6, LSM7, LSM8, BRR2 and DIB1.

The protein localises to the nucleus. Its subcellular location is the cytoplasm. Functionally, lays a role in pre-mRNA splicing as a core component of the spliceosomal U1, U2, U4 and U5 small nuclear ribonucleoproteins (snRNPs), the building blocks of the spliceosome. Also binds telomerase RNA and is required for its accumulation. The chain is Small nuclear ribonucleoprotein Sm D1 (SMD1) from Saccharomyces cerevisiae (strain ATCC 204508 / S288c) (Baker's yeast).